We begin with the raw amino-acid sequence, 402 residues long: Phosphoglycerate kinase (402 aa).

Residues 24–26 (DFN), arginine 40, 63–66 (HFGR), arginine 122, and arginine 155 each bind substrate. Residues lysine 206, glycine 297, glutamate 328, and 358 to 361 (GGDS) each bind ATP.

The protein belongs to the phosphoglycerate kinase family. As to quaternary structure, monomer.

Its subcellular location is the cytoplasm. The enzyme catalyses (2R)-3-phosphoglycerate + ATP = (2R)-3-phospho-glyceroyl phosphate + ADP. It participates in carbohydrate degradation; glycolysis; pyruvate from D-glyceraldehyde 3-phosphate: step 2/5. In Prochlorococcus marinus (strain MIT 9312), this protein is Phosphoglycerate kinase.